The following is a 621-amino-acid chain: Chaperone protein HscA homolog (621 aa).

It belongs to the heat shock protein 70 family.

Functionally, chaperone involved in the maturation of iron-sulfur cluster-containing proteins. Has a low intrinsic ATPase activity which is markedly stimulated by HscB. The polypeptide is Chaperone protein HscA homolog (Ralstonia pickettii (strain 12J)).